The sequence spans 309 residues: Homoserine kinase (309 aa).

91–101 (PIGSGLGSSAC) is a binding site for ATP.

It belongs to the GHMP kinase family. Homoserine kinase subfamily.

It is found in the cytoplasm. The catalysed reaction is L-homoserine + ATP = O-phospho-L-homoserine + ADP + H(+). It functions in the pathway amino-acid biosynthesis; L-threonine biosynthesis; L-threonine from L-aspartate: step 4/5. Its function is as follows. Catalyzes the ATP-dependent phosphorylation of L-homoserine to L-homoserine phosphate. The protein is Homoserine kinase of Salmonella agona (strain SL483).